The primary structure comprises 364 residues: O-methyltransferase ZRP4 (364 aa).

S-adenosyl-L-methionine contacts are provided by Gly208, Asp231, Asp251, Met252, and Lys265. The active-site Proton acceptor is the His269.

Belongs to the class I-like SAM-binding methyltransferase superfamily. Cation-independent O-methyltransferase family. COMT subfamily. Homodimer. In terms of tissue distribution, accumulates preferentially in the roots and is located predominantly in the region of the endodermis, low levels are seen in the leaves, stems and other shoot organs.

Its function is as follows. May be involved in the O-methylation of suberin phenylpropanoid precursors. This is O-methyltransferase ZRP4 (ZRP4) from Zea mays (Maize).